We begin with the raw amino-acid sequence, 651 residues long: Cylicin-1 (651 aa).

Disordered stretches follow at residues 110-241 (LKKA…CSEN) and 267-615 (NYSQ…CEPS). Composition is skewed to basic and acidic residues over residues 111 to 129 (KKAE…PLKK) and 146 to 173 (QIVE…EQSK). Residues 186 to 195 (QNSKTVSKNC) are compositionally biased toward polar residues. The span at 196-205 (SQKDKKDSKN) shows a compositional bias: basic and acidic residues. A compositionally biased stretch (polar residues) spans 230 to 241 (SNDPISEICSEN). The segment covering 271–281 (NNSKNYSLKYT) has biased composition (low complexity). 8 consecutive repeat copies span residues 278-305 (LKYT…DSKD), 306-342 (AKKD…DSKD), 343-379 (ERKD…DAKD), 380-417 (ARND…ESKE), 418-453 (SQKD…PKGD), 454-491 (SKKG…SDLE), 492-531 (LKKD…SKTG), and 532-553 (FKTS…YKPG). Composition is skewed to basic and acidic residues over residues 284–308 (TKKD…DAKK), 318–331 (KKDD…KDTE), 338–368 (GDSK…KYPE), 375–402 (GDAK…DAKK), 413–441 (LESK…KNDE), and 448–482 (SEPK…KNAE). Positions 495–505 (DKKHSKEKKGS) are enriched in basic residues. Residues 506–518 (KKDIKKDARKDTE) are compositionally biased toward basic and acidic residues. Over residues 529–538 (KTGFKTSTKI) the composition is skewed to polar residues. Positions 532-553 (FKTSTKIKGSDTESEESLYKPG) are 8 X approximate tandem repeats. The segment covering 587-607 (TFNEKGEKASTGRVPPSREKP) has biased composition (basic and acidic residues).

In terms of assembly, interacts with proteins of spermatozoa head including ACTL7A, CCIN, FAM209A and SPACA1; the interactions may be necessary for proper acrosome attachment to the nuclear envelope. In terms of tissue distribution, testis.

The protein resides in the cytoplasm. It is found in the cytoskeleton. Its subcellular location is the perinuclear theca. The protein localises to the calyx. Functionally, plays a role in the establishment of normal sperm morphology during spermatogenesis and is required for acrosome attachment to the nuclear envelope. This Homo sapiens (Human) protein is Cylicin-1 (CYLC1).